The sequence spans 293 residues: Elongation factor Ts (293 aa).

The interval 80-83 is involved in Mg(2+) ion dislocation from EF-Tu; sequence TDFV.

It belongs to the EF-Ts family.

Its subcellular location is the cytoplasm. Functionally, associates with the EF-Tu.GDP complex and induces the exchange of GDP to GTP. It remains bound to the aminoacyl-tRNA.EF-Tu.GTP complex up to the GTP hydrolysis stage on the ribosome. This chain is Elongation factor Ts, found in Herminiimonas arsenicoxydans.